A 323-amino-acid chain; its full sequence is Conjugal transfer protein TrbB (323 aa).

Residue 151–158 (GGTGSGKT) participates in ATP binding.

The protein belongs to the GSP E family.

It is found in the cytoplasm. The sequence is that of Conjugal transfer protein TrbB (trbB) from Rhizobium radiobacter (Agrobacterium tumefaciens).